The sequence spans 456 residues: RUN domain-containing protein 3B (456 aa).

Residues 1–26 (MASRSLGGLSGIRGGGGGGGKKSLSS) form a disordered region. Positions 8 to 21 (GLSGIRGGGGGGGK) are enriched in gly residues. Position 13 is an omega-N-methylarginine (R13). One can recognise an RUN domain in the interval 57–189 (DDSSPEFNNF…IDFSFCLKGE (133 aa)). Residues S215 and S216 each carry the phosphoserine modification. Positions 300–325 (AHKLEKEQLEYIIVELQDQLTVLKNN) form a coiled coil. The interval 382–405 (SLSQTSLDPGQSQEGDGKQDTLNI) is disordered.

This sequence belongs to the RUNDC3 family. As to quaternary structure, interacts with RAP2A.

This chain is RUN domain-containing protein 3B (RUNDC3B), found in Macaca fascicularis (Crab-eating macaque).